A 448-amino-acid chain; its full sequence is tRNA(Ile)-lysidine synthase (448 aa).

25 to 30 (SGGSDS) lines the ATP pocket.

This sequence belongs to the tRNA(Ile)-lysidine synthase family.

The protein resides in the cytoplasm. It catalyses the reaction cytidine(34) in tRNA(Ile2) + L-lysine + ATP = lysidine(34) in tRNA(Ile2) + AMP + diphosphate + H(+). Its function is as follows. Ligates lysine onto the cytidine present at position 34 of the AUA codon-specific tRNA(Ile) that contains the anticodon CAU, in an ATP-dependent manner. Cytidine is converted to lysidine, thus changing the amino acid specificity of the tRNA from methionine to isoleucine. The protein is tRNA(Ile)-lysidine synthase of Brucella abortus (strain S19).